The following is a 297-amino-acid chain: Phosphoribosylaminoimidazole-succinocarboxamide synthase (297 aa).

It belongs to the SAICAR synthetase family.

The enzyme catalyses 5-amino-1-(5-phospho-D-ribosyl)imidazole-4-carboxylate + L-aspartate + ATP = (2S)-2-[5-amino-1-(5-phospho-beta-D-ribosyl)imidazole-4-carboxamido]succinate + ADP + phosphate + 2 H(+). It functions in the pathway purine metabolism; IMP biosynthesis via de novo pathway; 5-amino-1-(5-phospho-D-ribosyl)imidazole-4-carboxamide from 5-amino-1-(5-phospho-D-ribosyl)imidazole-4-carboxylate: step 1/2. This is Phosphoribosylaminoimidazole-succinocarboxamide synthase (purC) from Mycobacterium leprae (strain TN).